A 357-amino-acid chain; its full sequence is NAD kinase 1 (357 aa).

The active-site Proton acceptor is the D68. NAD(+) contacts are provided by residues 68-69, R73, 175-176, R186, D205, A240, and Q275; these read DG and ND.

Belongs to the NAD kinase family. A divalent metal cation serves as cofactor.

It localises to the cytoplasm. The catalysed reaction is NAD(+) + ATP = ADP + NADP(+) + H(+). Involved in the regulation of the intracellular balance of NAD and NADP, and is a key enzyme in the biosynthesis of NADP. Catalyzes specifically the phosphorylation on 2'-hydroxyl of the adenosine moiety of NAD to yield NADP. The polypeptide is NAD kinase 1 (Streptomyces avermitilis (strain ATCC 31267 / DSM 46492 / JCM 5070 / NBRC 14893 / NCIMB 12804 / NRRL 8165 / MA-4680)).